The chain runs to 295 residues: Threonine/homoserine exporter RhtA (295 aa).

At 1-9 (MPGSLRKMP) the chain is on the cytoplasmic side. The chain crosses the membrane as a helical span at residues 10–30 (VWLPIVILLVAMASIQGGASL). Positions 30–135 (LAKSLFPLVG…VLAVLGLWFL (106 aa)) constitute an EamA 1 domain. Over 31–38 (AKSLFPLV) the chain is Periplasmic. The chain crosses the membrane as a helical span at residues 39–59 (GAPGVTALRLALGTLILIAFF). Over 60–71 (KPWRLRFAKEQR) the chain is Cytoplasmic. A helical transmembrane segment spans residues 72-92 (LPLLFYGVSLGGMNYLFYLSI). Glutamine 93 is a topological domain (periplasmic). A helical membrane pass occupies residues 94 to 114 (TVPLGIAVALEFTGPLAVALF). At 115–118 (SSRR) the chain is on the cytoplasmic side. The chain crosses the membrane as a helical span at residues 119 to 139 (PVDFVWVVLAVLGLWFLLPLG). The Periplasmic portion of the chain corresponds to 140-146 (QDVSHVD). Residues 147 to 167 (LTGCALALGAGACWAIYILSG) form a helical membrane-spanning segment. An EamA 2 domain is found at 159-278 (CWAIYILSGQ…LGAIIAASMG (120 aa)). At 168–175 (QRAGAEHG) the chain is on the cytoplasmic side. The chain crosses the membrane as a helical span at residues 176–196 (PATVAIGSLIAALIFVPIGAL). Topologically, residues 197 to 200 (QAGE) are periplasmic. Residues 201-221 (ALWHWSVIPLGLAVAILSTAL) traverse the membrane as a helical segment. At 222–237 (PYSLEMIALTRLPTRT) the chain is on the cytoplasmic side. Residues 238–258 (FGTLMSMEPALAAVSGMIFLG) traverse the membrane as a helical segment. Residues 259–262 (ETLT) lie on the Periplasmic side of the membrane. A helical membrane pass occupies residues 263–283 (PIQLLALGAIIAASMGSTLTV). At 284–295 (RKESKIKELDIN) the chain is on the cytoplasmic side.

Belongs to the drug/metabolite transporter (DMT) superfamily. 10 TMS drug/metabolite exporter (DME) (TC 2.A.7.3) family.

It is found in the cell inner membrane. Its function is as follows. Involved in the efflux of threonine and homoserine. The chain is Threonine/homoserine exporter RhtA (rhtA) from Escherichia coli O157:H7.